A 127-amino-acid chain; its full sequence is Fluoride-specific ion channel FluC (127 aa).

The next 4 membrane-spanning stretches (helical) occupy residues 4 to 24 (FSIL…RYLV), 38 to 58 (YGTL…IAAF), 71 to 91 (VIGL…MDNV), and 104 to 124 (LNIL…FQLL). 2 residues coordinate Na(+): Gly78 and Thr81.

The protein belongs to the fluoride channel Fluc/FEX (TC 1.A.43) family.

The protein localises to the cell inner membrane. It carries out the reaction fluoride(in) = fluoride(out). With respect to regulation, na(+) is not transported, but it plays an essential structural role and its presence is essential for fluoride channel function. Fluoride-specific ion channel. Important for reducing fluoride concentration in the cell, thus reducing its toxicity. This Vibrio parahaemolyticus serotype O3:K6 (strain RIMD 2210633) protein is Fluoride-specific ion channel FluC.